The primary structure comprises 198 residues: Alpha1-proteinase inhibitor-degradation deficient protein 37 (198 aa).

The residue at position 79 (serine 79) is a Phosphoserine.

It localises to the cytoplasm. Functionally, involved in ER-associated protein degradation (ERAD). The polypeptide is Alpha1-proteinase inhibitor-degradation deficient protein 37 (ADD37) (Saccharomyces cerevisiae (strain ATCC 204508 / S288c) (Baker's yeast)).